Here is a 248-residue protein sequence, read N- to C-terminus: PF03932 family protein CutC (248 aa).

Belongs to the CutC family. As to quaternary structure, homodimer.

Its subcellular location is the cytoplasm. The chain is PF03932 family protein CutC from Escherichia coli O17:K52:H18 (strain UMN026 / ExPEC).